Consider the following 509-residue polypeptide: MNEQQRLASQQANASTKKEEKDYSKYFEHVYQPPSLKDAKKRGKEQVKIERDFGLPEEFRNFGKGRKFYIRTYGCQMNEHDTEVMAGIFTTLGYEPTFTTEDADVILLNTCAIRENAENKVFGELGHLKPLKQKNPDLLIGVCGCMSQEESVVNKIMQKHQHVDMVFGTHNIHRLPYILKDAMFSKATVVEVWSKEGDVIENLPKVRRGDIKAWVNIMYGCDKFCTYCIVPYTRGKERSRRPEDIIKEVRHLAANGYKEITLLGQNVNAYGKDFDDLEYGLGDLMDELRKIDIARIRFTTSHPRDFDDHLIEVLGKGGNLVEHIHLPVQSGSTDMLKIMARKYTREQYLELVRKIKKTIPNVVLTTDIIVGFPNETDEQFEETLSLYREVEFDSAFTFIYSPREGTPAAKMKDNIPMEVKKERLQRLNELVNEFSAKKNKKYEGQIVEVLVDGESKNNPDVLAGYTRTNKLVNFVAPKSVIGQLVKVKITEAKTWSLNGELVEEPIEVK.

Residues 1-15 (MNEQQRLASQQANAS) are compositionally biased toward polar residues. Residues 1–22 (MNEQQRLASQQANASTKKEEKD) form a disordered region. The 119-residue stretch at 66–184 (RKFYIRTYGC…LPYILKDAMF (119 aa)) folds into the MTTase N-terminal domain. Cysteine 75, cysteine 111, cysteine 145, cysteine 221, cysteine 225, and cysteine 228 together coordinate [4Fe-4S] cluster. The Radical SAM core domain occupies 207-437 (RRGDIKAWVN…NELVNEFSAK (231 aa)). One can recognise a TRAM domain in the interval 440-503 (KKYEGQIVEV…TWSLNGELVE (64 aa)).

This sequence belongs to the methylthiotransferase family. MiaB subfamily. Monomer. The cofactor is [4Fe-4S] cluster.

The protein resides in the cytoplasm. It catalyses the reaction N(6)-dimethylallyladenosine(37) in tRNA + (sulfur carrier)-SH + AH2 + 2 S-adenosyl-L-methionine = 2-methylsulfanyl-N(6)-dimethylallyladenosine(37) in tRNA + (sulfur carrier)-H + 5'-deoxyadenosine + L-methionine + A + S-adenosyl-L-homocysteine + 2 H(+). Catalyzes the methylthiolation of N6-(dimethylallyl)adenosine (i(6)A), leading to the formation of 2-methylthio-N6-(dimethylallyl)adenosine (ms(2)i(6)A) at position 37 in tRNAs that read codons beginning with uridine. This Bacillus cytotoxicus (strain DSM 22905 / CIP 110041 / 391-98 / NVH 391-98) protein is tRNA-2-methylthio-N(6)-dimethylallyladenosine synthase.